A 257-amino-acid chain; its full sequence is MSDLKKAAQKAIELMDLTTLNDDDTDQKVIELCHKAKTPAGNTAAICIYPRFIPIARKTLNELGCEDIKIATVTNFPHGNDDIAIAVLETRAAVAYGADEVDVVFPYRSLMEGNETLGFELVKACKEACGDDAILKVIIESGVLEDPALIRKASELCIDAGADFIKTSTGKVPVNATIEAAEIMMTVISEKNTKVGFKPAGGVRDAAAAGEFLGLAARLLGDDWATPATFRFGASSLLVNLLHTLELGEEAKGPQGY.

Residue Asp-102 is the Proton donor/acceptor of the active site. Lys-166 acts as the Schiff-base intermediate with acetaldehyde in catalysis. Lys-198 (proton donor/acceptor) is an active-site residue.

This sequence belongs to the DeoC/FbaB aldolase family. DeoC type 2 subfamily.

It is found in the cytoplasm. The enzyme catalyses 2-deoxy-D-ribose 5-phosphate = D-glyceraldehyde 3-phosphate + acetaldehyde. It participates in carbohydrate degradation; 2-deoxy-D-ribose 1-phosphate degradation; D-glyceraldehyde 3-phosphate and acetaldehyde from 2-deoxy-alpha-D-ribose 1-phosphate: step 2/2. Its function is as follows. Catalyzes a reversible aldol reaction between acetaldehyde and D-glyceraldehyde 3-phosphate to generate 2-deoxy-D-ribose 5-phosphate. The protein is Deoxyribose-phosphate aldolase of Shewanella woodyi (strain ATCC 51908 / MS32).